The chain runs to 381 residues: KRR1 small subunit processome component homolog (381 aa).

Residues 1-51 are disordered; sequence MASPSLERPEKGAGKSEFRNQKPKPENQDESELLTVPDGWKEPAFSKEDNP. The residue at position 2 (Ala2) is an N-acetylalanine. Phosphoserine is present on residues Ser3 and Ser5. Basic and acidic residues-rich tracts occupy residues 7–27 and 39–51; these read ERPEKGAGKSEFRNQKPKPEN and GWKEPAFSKEDNP. Lys24 participates in a covalent cross-link: Glycyl lysine isopeptide (Lys-Gly) (interchain with G-Cter in SUMO2). Positions 154–206 constitute a KH domain; it reads KERFVKRRQRLIGPKGSTLKALELLTNCYIMVQGNTVSAIGPFSGLKEVRKVV. Over residues 250-262 the composition is skewed to basic residues; that stretch reads NVNKRKEPKKKTV. 2 disordered regions span residues 250–278 and 309–338; these read NVNKRKEPKKKTVKKEYTPFPPPQPESQI and AISKRQEERNKAFIPPKEKPIVKPKEASTE. Residues Lys340 and Lys369 each participate in a glycyl lysine isopeptide (Lys-Gly) (interchain with G-Cter in SUMO2) cross-link.

Belongs to the KRR1 family. As to quaternary structure, part of the small subunit (SSU) processome, composed of more than 70 proteins and the RNA chaperone small nucleolar RNA (snoRNA) U3. (Microbial infection) Directly interacts with HIV-1 protein VPR. Also identified in a complex with NR3C1 and HIV-1 protein VPR.

It is found in the nucleus. The protein resides in the nucleolus. Its subcellular location is the cytoplasm. Part of the small subunit (SSU) processome, first precursor of the small eukaryotic ribosomal subunit. During the assembly of the SSU processome in the nucleolus, many ribosome biogenesis factors, an RNA chaperone and ribosomal proteins associate with the nascent pre-rRNA and work in concert to generate RNA folding, modifications, rearrangements and cleavage as well as targeted degradation of pre-ribosomal RNA by the RNA exosome. The protein is KRR1 small subunit processome component homolog of Homo sapiens (Human).